Consider the following 153-residue polypeptide: Small heat shock protein ibp (153 aa).

The sHSP domain maps to 35 to 153 (KIISDSVPPY…KIQKIQINVK (119 aa)).

Belongs to the small heat shock protein (HSP20) family.

The sequence is that of Small heat shock protein ibp (ibp) from Buchnera aphidicola subsp. Thelaxes suberi.